Reading from the N-terminus, the 1162-residue chain is Lysine-specific demethylase 2A (1162 aa).

Ser28 carries the post-translational modification Phosphoserine. In terms of domain architecture, JmjC spans 148–316; it reads FSHTRLENMV…MQLKIYNIED (169 aa). Thr209 contacts substrate. The Fe cation site is built by His212 and Asp214. Residue Lys229 coordinates substrate. Fe cation is bound at residue His284. The segment at 367–389 is disordered; sequence GLESGNGDEEAVDREPRRLSSRR. Phosphoserine is present on residues Ser390 and Ser394. Residue Lys505 forms a Glycyl lysine isopeptide (Lys-Gly) (interchain with G-Cter in SUMO2) linkage. A disordered region spans residues 532-557; that stretch reads VPTIPITKPHTMKPAPRLTPVRPAAA. Phosphothreonine is present on Thr550. Phosphoserine is present on Ser558. Residues 564-610 form a CXXC-type zinc finger; it reads ARRRRVRCRKCKACVQGECGVCHYCRDMKKFGGPGRMKQSCVLRQCL. 10 residues coordinate Zn(2+): Cys571, Cys574, Cys577, Cys582, Cys585, Cys588, Cys604, Cys609, Cys620, and Cys623. Residues 617 to 678 form a PHD-type zinc finger; it reads SVTCSLCGEV…CWECPKCYQE (62 aa). Thr632 is subject to Phosphothreonine. 6 residues coordinate Zn(2+): Cys642, Cys645, His650, Cys653, Cys672, and Cys675. Ser692 carries the phosphoserine modification. The disordered stretch occupies residues 704–789; the sequence is PLRSCDEPLT…PSGKKELSEV (86 aa). Thr713 is modified (phosphothreonine). Residues Ser718 and Ser731 each carry the phosphoserine modification. Composition is skewed to basic and acidic residues over residues 746–757 and 771–789; these read SDHHSASRDERF and TMVREKENNPSGKKELSEV. Ser825, Ser832, Ser869, and Ser883 each carry phosphoserine. The tract at residues 839-887 is disordered; it reads HCPARTPQRGDEEGLGGEEEEEEEEEEEDDSAEEGGAARLNGRGSWAQD. Residues 851 to 871 show a composition bias toward acidic residues; that stretch reads EGLGGEEEEEEEEEEEDDSAE. Residues 889 to 936 form the F-box domain; that stretch reads DESWMQREVWMSVFRYLSRRELCECMRVCKTWYKWCCDKRLWTKIDLS. LRR repeat units follow at residues 961–982 and 984–1010; these read WTNISKKQLTWLVNRLPGLKDL and LAGCSWSAVSALSTSSCPLLRTLDLRW. Arg1020 carries the post-translational modification ADP-ribosylarginine. 4 LRR repeats span residues 1048 to 1073, 1074 to 1103, 1104 to 1128, and 1129 to 1156; these read GLDITDATLRLIIRHMPLLSRLDLSH, CSHLTDQSSNLLTAVGSSTRYSLTELNMAG, CNKLTDQTLIYLRRIANVTLIDLRG, and CKQITRKACEHFISDLSINSLYCLSDEK.

This sequence belongs to the JHDM1 histone demethylase family. As to quaternary structure, interacts with CBX5/HP1A; the interaction promotes CBX5 localization to chromatin. The SKP1-KDM2A complex interacts with UBB. Part of a SCF (SKP1-cullin-F-box) protein ligase complex. Fe(2+) is required as a cofactor. In terms of processing, mono-ADP-ribosylated at Arg-1020 in response to DNA damage, leading to displacement from chromatin, resulting in increased dimethylation of histone H3 at 'Lys-36'. In terms of tissue distribution, widely expressed, with highest levels in brain, testis and ovary, followed by lung.

The protein localises to the nucleus. Its subcellular location is the nucleoplasm. It is found in the chromosome. The catalysed reaction is N(6),N(6)-dimethyl-L-lysyl(36)-[histone H3] + 2 2-oxoglutarate + 2 O2 = L-lysyl(36)-[histone H3] + 2 formaldehyde + 2 succinate + 2 CO2. Functionally, histone demethylase that specifically demethylates 'Lys-36' of histone H3, thereby playing a central role in histone code. Preferentially demethylates dimethylated H3 'Lys-36' residue while it has weak or no activity for mono- and tri-methylated H3 'Lys-36'. May also recognize and bind to some phosphorylated proteins and promote their ubiquitination and degradation. Required to maintain the heterochromatic state. Associates with centromeres and represses transcription of small non-coding RNAs that are encoded by the clusters of satellite repeats at the centromere. Required to sustain centromeric integrity and genomic stability, particularly during mitosis. Regulates circadian gene expression by repressing the transcriptional activator activity of CLOCK-BMAL1 heterodimer and RORA in a catalytically-independent manner. This is Lysine-specific demethylase 2A (KDM2A) from Homo sapiens (Human).